An 83-amino-acid chain; its full sequence is Small ribosomal subunit protein uS17 (83 aa).

Belongs to the universal ribosomal protein uS17 family. Part of the 30S ribosomal subunit.

Functionally, one of the primary rRNA binding proteins, it binds specifically to the 5'-end of 16S ribosomal RNA. In Buchnera aphidicola subsp. Acyrthosiphon pisum (strain 5A), this protein is Small ribosomal subunit protein uS17.